A 193-amino-acid polypeptide reads, in one-letter code: Proton-translocating ferredoxin:NAD(+) oxidoreductase complex subunit A (193 aa).

A run of 6 helical transmembrane segments spans residues 11-31 (AVVV…FFGV), 39-59 (VGMG…AWVV), 62-82 (FVLI…LLIA), 102-122 (MWGI…VPIL), 134-154 (VVNA…MASL), and 171-191 (GVAF…SGMI).

This sequence belongs to the NqrDE/RnfAE family. As to quaternary structure, the complex is composed of six subunits: RnfA, RnfB, RnfC, RnfD, RnfE and RnfG.

Its subcellular location is the cell membrane. Part of a membrane-bound complex that couples electron transfer with translocation of ions across the membrane. Couples electron transfer from reduced ferredoxin to NAD(+) with translocation of H(+) out of the cell. Essential for energy conservation during autotrophic growth. Contributes to ATP synthesis during heterotrophic growth. This is Proton-translocating ferredoxin:NAD(+) oxidoreductase complex subunit A from Clostridium ljungdahlii (strain ATCC 55383 / DSM 13528 / PETC).